The primary structure comprises 1444 residues: DNA polymerase III PolC-type (1444 aa).

The 157-residue stretch at 428 to 584 (YCVFDVETTG…FDAEATAYLA (157 aa)) folds into the Exonuclease domain.

It belongs to the DNA polymerase type-C family. PolC subfamily.

The protein resides in the cytoplasm. It catalyses the reaction DNA(n) + a 2'-deoxyribonucleoside 5'-triphosphate = DNA(n+1) + diphosphate. Its function is as follows. Required for replicative DNA synthesis. This DNA polymerase also exhibits 3' to 5' exonuclease activity. The sequence is that of DNA polymerase III PolC-type from Listeria monocytogenes serovar 1/2a (strain ATCC BAA-679 / EGD-e).